Consider the following 637-residue polypeptide: Pyrethroid hydrolase (637 aa).

It carries out the reaction (-)-trans-permethrin + H2O = (3-phenoxyphenyl)methanol + (1S,3R)-3-(2,2-dichlorovinyl)-2,2-dimethylcyclopropanecarboxylate + H(+). With respect to regulation, inhibited by Hg(2+), Ag(+) and rho-chloromercuribenzoate. Catalyzes the hydrolysis of pyrethroids pesticides. Hydrolyzes cis-permethrin at approximately equal rate to trans-permethrin. This chain is Pyrethroid hydrolase (estP), found in Klebsiella sp.